The chain runs to 314 residues: Ribonucleoside-diphosphate reductase small subunit (314 aa).

Positions 73, 103, and 106 each coordinate Fe cation. Tyr-110 is an active-site residue. A helical transmembrane segment spans residues 160 to 180 (VLMILIEGIFFSSSFAAIAYL). Fe cation-binding residues include Glu-166, Glu-200, and His-203.

It belongs to the ribonucleoside diphosphate reductase small chain family. In terms of assembly, heterotetramer composed of a homodimer of the large subunit (R1) and a homodimer of the small subunit (R2). Larger multisubunit protein complex are also active, composed of (R1)n(R2)n. Fe cation is required as a cofactor.

It is found in the host membrane. The catalysed reaction is a 2'-deoxyribonucleoside 5'-diphosphate + [thioredoxin]-disulfide + H2O = a ribonucleoside 5'-diphosphate + [thioredoxin]-dithiol. In terms of biological role, ribonucleoside-diphosphate reductase holoenzyme provides the precursors necessary for viral DNA synthesis. Allows virus growth in non-dividing cells, as well as reactivation from latency in infected hosts. Catalyzes the biosynthesis of deoxyribonucleotides from the corresponding ribonucleotides. The sequence is that of Ribonucleoside-diphosphate reductase small subunit from Bovine herpesvirus 1.1 (strain Cooper) (BoHV-1).